The primary structure comprises 173 residues: NADH-ubiquinone oxidoreductase chain 6 (173 aa).

6 helical membrane passes run 1–21 (MTYF…AVAS), 27–47 (YGVV…LSLG), 48–68 (VSFV…VVFV), 85–105 (WGVV…LIVG), 106–126 (GSIG…MFSV), and 139–159 (CGVG…FVVL).

This sequence belongs to the complex I subunit 6 family.

The protein localises to the mitochondrion membrane. It carries out the reaction a ubiquinone + NADH + 5 H(+)(in) = a ubiquinol + NAD(+) + 4 H(+)(out). Functionally, core subunit of the mitochondrial membrane respiratory chain NADH dehydrogenase (Complex I) that is believed to belong to the minimal assembly required for catalysis. Complex I functions in the transfer of electrons from NADH to the respiratory chain. The immediate electron acceptor for the enzyme is believed to be ubiquinone. In Aethia psittacula (Parakeet auklet), this protein is NADH-ubiquinone oxidoreductase chain 6 (MT-ND6).